We begin with the raw amino-acid sequence, 151 residues long: Putative pre-16S rRNA nuclease (151 aa).

The protein belongs to the YqgF nuclease family.

The protein resides in the cytoplasm. Functionally, could be a nuclease involved in processing of the 5'-end of pre-16S rRNA. This chain is Putative pre-16S rRNA nuclease, found in Nostoc sp. (strain PCC 7120 / SAG 25.82 / UTEX 2576).